Reading from the N-terminus, the 215-residue chain is LexA repressor (215 aa).

The H-T-H motif DNA-binding region spans 28 to 48 (RAEIAAELGFSSPNAAEEHLR). Residues serine 133 and lysine 170 each act as for autocatalytic cleavage activity in the active site.

It belongs to the peptidase S24 family. In terms of assembly, homodimer.

The enzyme catalyses Hydrolysis of Ala-|-Gly bond in repressor LexA.. Its function is as follows. Represses a number of genes involved in the response to DNA damage (SOS response), including recA and lexA. In the presence of single-stranded DNA, RecA interacts with LexA causing an autocatalytic cleavage which disrupts the DNA-binding part of LexA, leading to derepression of the SOS regulon and eventually DNA repair. This chain is LexA repressor, found in Burkholderia thailandensis (strain ATCC 700388 / DSM 13276 / CCUG 48851 / CIP 106301 / E264).